The sequence spans 111 residues: Nucleoid-associated protein NMA1657 (111 aa).

Belongs to the YbaB/EbfC family. As to quaternary structure, homodimer.

It is found in the cytoplasm. Its subcellular location is the nucleoid. Its function is as follows. Binds to DNA and alters its conformation. May be involved in regulation of gene expression, nucleoid organization and DNA protection. The protein is Nucleoid-associated protein NMA1657 of Neisseria meningitidis serogroup A / serotype 4A (strain DSM 15465 / Z2491).